A 1572-amino-acid chain; its full sequence is Dynein axonemal assembly factor 8 (1572 aa).

4 disordered regions span residues 1–21, 262–304, 324–428, and 849–871; these read MASE…NWSG, SEEV…HPQS, SLEQ…EILQ, and FQNP…SDSE. Residues 324–335 are compositionally biased toward polar residues; the sequence is SLEQNPENPSQR. Positions 336–351 are enriched in basic and acidic residues; sequence NEQKEKHHLNKTDHTG. Polar residues predominate over residues 361-374; that stretch reads NIQNDSLSDANMSN. A compositionally biased stretch (basic and acidic residues) spans 409-426; sequence VGREEKDGREEQEKEKEI. Residues 849–865 show a composition bias toward polar residues; sequence FQNPYSRSTQPRSANLR. The tract at residues 1249 to 1382 is NDK; that stretch reads TVLLLKPRIW…IRDIKTFFPE (134 aa).

As to quaternary structure, interacts with DNAI2. As to expression, expression is enriched in multiciliated cells in the epidermis and the nephrostomes of the pronephros.

It localises to the dynein axonemal particle. It is found in the cytoplasm. In cyliated cells, dynein axonemal particle-specific protein required for deployment of ODA to the axoneme. Interacts with outer dynein arm (ODA) subunits. The chain is Dynein axonemal assembly factor 8 (dnaaf8) from Xenopus laevis (African clawed frog).